A 790-amino-acid polypeptide reads, in one-letter code: MSHHSSPPPKHKGEHKGHGLPRGSERGSSSRDKDRSATTVSSSAPMPAGGKSSRTNCPPPAPPKTVNRLINEKSPYLLQHAYNPVDWYPWGQEAFDKAKKENKPIFLSVGYSTCHWCHMMEEESFQNEEIGRLLNENFICVMVDREERPDVDKVYMTFVQATSSGGGWPMNVWLTPGLQPFVGGTYFPPEDGLTRVGFRTVLMRICDQWKLNKNTLLENSQRVTTALLARSEISVGDRQIPASAATMNSRCFQQLDEGYDEEYGGFAEAPKFPTPVILNFLFSYWLSHRLTQDGSRAQQMALHTLKMMANGGIQDHVGQGFHRYSTDRQWHIPHFEKMLYDQAQLSVVYTQAFQISGDEFYADVAKGILQYVTRTLSHRSGGFYSAEDADSPPERGMKPQEGAYYVWTVKEVQQLLPEPVVGASEPLTSGQLLMKHYGLSEVGNINSSQDPNGELHGQNVLMVRYSLELTAARYGLEVEAVRALLNTGLEKLFQARKHRPKAHLDNKMLAAWNGLMVSGFAVTGAALGMEKLVAQATSGAKFLKRHMFDVSSGRLKRTCYAGTGGTVEQSNPPCWGFLEDYAFVVRGLLDLYEASQESSWLEWALRLQDTQDKLFWDPRGGGYFCSEAELGADLPLRLKDDQDGAEPSANSVSAHNLLRLHSFTGHKDWMDKCVCLLTAFSERMRRVPVALPEMVRTLSAQQQTLKQIVICGDPQAKDTKALLQCVHSIYVPNKVLILADGDPSSFLSRQLPFLSSLRRVEDRATVYIFENQACSMPITDPCELRKLLHQ.

The segment covering 1 to 19 (MSHHSSPPPKHKGEHKGHG) has biased composition (basic residues). A disordered region spans residues 1-67 (MSHHSSPPPK…PPPAPPKTVN (67 aa)). Serine 5 bears the Phosphoserine mark. The span at 23 to 36 (GSERGSSSRDKDRS) shows a compositional bias: basic and acidic residues. Residue serine 653 is modified to Phosphoserine.

The protein localises to the secreted. May play a role in fertility regulation. This chain is Spermatogenesis-associated protein 20 (Spata20), found in Mus musculus (Mouse).